The sequence spans 55 residues: uncharacterized protein (55 aa).

A helical membrane pass occupies residues 27–47; it reads IFLIYHFSPIYCPYLFLFTVF.

It localises to the membrane. This is an uncharacterized protein from Acheta domesticus (House cricket).